A 272-amino-acid polypeptide reads, in one-letter code: Putative phosphoenolpyruvate synthase regulatory protein (272 aa).

151–158 (GVSRSGKT) is an ADP binding site.

Belongs to the pyruvate, phosphate/water dikinase regulatory protein family. PSRP subfamily.

It carries out the reaction [pyruvate, water dikinase] + ADP = [pyruvate, water dikinase]-phosphate + AMP + H(+). The catalysed reaction is [pyruvate, water dikinase]-phosphate + phosphate + H(+) = [pyruvate, water dikinase] + diphosphate. In terms of biological role, bifunctional serine/threonine kinase and phosphorylase involved in the regulation of the phosphoenolpyruvate synthase (PEPS) by catalyzing its phosphorylation/dephosphorylation. The protein is Putative phosphoenolpyruvate synthase regulatory protein of Desulfotalea psychrophila (strain LSv54 / DSM 12343).